Here is a 210-residue protein sequence, read N- to C-terminus: 7-carboxy-7-deazaguanine synthase (210 aa).

Residues 12 to 14 (LQG) and Arg-27 each bind substrate. The region spanning 18-210 (NAGRPAVFCR…MQTHKYLNIP (193 aa)) is the Radical SAM core domain. Residues Cys-31, Cys-46, and Cys-49 each contribute to the [4Fe-4S] cluster site. 48-50 (FCD) contributes to the S-adenosyl-L-methionine binding site. Thr-51 contacts Mg(2+). Thr-90 lines the substrate pocket. Residues Gly-92, 133–135 (SPK), and 173–176 (QPMD) each bind S-adenosyl-L-methionine. Pro-210 serves as a coordination point for substrate.

It belongs to the radical SAM superfamily. 7-carboxy-7-deazaguanine synthase family. As to quaternary structure, homodimer. It depends on [4Fe-4S] cluster as a cofactor. S-adenosyl-L-methionine is required as a cofactor. The cofactor is Mg(2+).

The catalysed reaction is 6-carboxy-5,6,7,8-tetrahydropterin + H(+) = 7-carboxy-7-deazaguanine + NH4(+). The protein operates within purine metabolism; 7-cyano-7-deazaguanine biosynthesis. Catalyzes the complex heterocyclic radical-mediated conversion of 6-carboxy-5,6,7,8-tetrahydropterin (CPH4) to 7-carboxy-7-deazaguanine (CDG), a step common to the biosynthetic pathways of all 7-deazapurine-containing compounds. The sequence is that of 7-carboxy-7-deazaguanine synthase from Burkholderia multivorans (strain ATCC 17616 / 249).